A 129-amino-acid polypeptide reads, in one-letter code: uncharacterized protein (129 aa).

Residues 1 to 28 (MAGTLFIILRFVDTTLPSSRVYCVRSLE) lie on the Cytoplasmic side of the membrane. The helical transmembrane segment at 29–49 (VSVAVELAAATVLAFESIGVV) threads the bilayer. Topologically, residues 50–54 (DDCGR) are extracellular. A helical transmembrane segment spans residues 55-75 (SVLFSIILIAAFICSVFLIAS). Residues 76–129 (EDIAGSRRSTGSCVTLWEGRNISFCLYRSNWLNTVPVGYMFFLRKNRSLDERYF) lie on the Cytoplasmic side of the membrane.

The protein resides in the membrane. This is an uncharacterized protein from Saccharomyces cerevisiae (strain ATCC 204508 / S288c) (Baker's yeast).